A 553-amino-acid polypeptide reads, in one-letter code: uncharacterized protein (553 aa).

Helical transmembrane passes span 6–26 (IKIF…QVDA) and 524–544 (SYWI…GYVF).

The protein to M.jannaschii MJ0795 and MJ1506.

The protein localises to the cell membrane. This is an uncharacterized protein from Methanocaldococcus jannaschii (strain ATCC 43067 / DSM 2661 / JAL-1 / JCM 10045 / NBRC 100440) (Methanococcus jannaschii).